A 172-amino-acid polypeptide reads, in one-letter code: NADH-quinone oxidoreductase subunit B (172 aa).

Residues cysteine 46, cysteine 47, cysteine 111, and cysteine 141 each contribute to the [4Fe-4S] cluster site.

It belongs to the complex I 20 kDa subunit family. NDH-1 is composed of 14 different subunits. Subunits NuoB, C, D, E, F, and G constitute the peripheral sector of the complex. [4Fe-4S] cluster is required as a cofactor.

The protein resides in the cell membrane. It catalyses the reaction a quinone + NADH + 5 H(+)(in) = a quinol + NAD(+) + 4 H(+)(out). NDH-1 shuttles electrons from NADH, via FMN and iron-sulfur (Fe-S) centers, to quinones in the respiratory chain. The immediate electron acceptor for the enzyme in this species is believed to be a menaquinone. Couples the redox reaction to proton translocation (for every two electrons transferred, four hydrogen ions are translocated across the cytoplasmic membrane), and thus conserves the redox energy in a proton gradient. The polypeptide is NADH-quinone oxidoreductase subunit B (Bacillus cereus (strain G9842)).